The following is a 484-amino-acid chain: tRNA sulfurtransferase (484 aa).

One can recognise a THUMP domain in the interval 63-167 (ELFAERLAHI…RDKLYMVSQR (105 aa)). Residues 185–186 (LI), K267, G289, and Q298 each bind ATP. A disulfide bond links C346 and C458. A Rhodanese domain is found at 406-484 (AAGNEVIIDI…GYNNVKVYRP (79 aa)). Residue C458 is the Cysteine persulfide intermediate of the active site.

It belongs to the ThiI family.

It localises to the cytoplasm. It catalyses the reaction [ThiI sulfur-carrier protein]-S-sulfanyl-L-cysteine + a uridine in tRNA + 2 reduced [2Fe-2S]-[ferredoxin] + ATP + H(+) = [ThiI sulfur-carrier protein]-L-cysteine + a 4-thiouridine in tRNA + 2 oxidized [2Fe-2S]-[ferredoxin] + AMP + diphosphate. The catalysed reaction is [ThiS sulfur-carrier protein]-C-terminal Gly-Gly-AMP + S-sulfanyl-L-cysteinyl-[cysteine desulfurase] + AH2 = [ThiS sulfur-carrier protein]-C-terminal-Gly-aminoethanethioate + L-cysteinyl-[cysteine desulfurase] + A + AMP + 2 H(+). The protein operates within cofactor biosynthesis; thiamine diphosphate biosynthesis. Catalyzes the ATP-dependent transfer of a sulfur to tRNA to produce 4-thiouridine in position 8 of tRNAs, which functions as a near-UV photosensor. Also catalyzes the transfer of sulfur to the sulfur carrier protein ThiS, forming ThiS-thiocarboxylate. This is a step in the synthesis of thiazole, in the thiamine biosynthesis pathway. The sulfur is donated as persulfide by IscS. The protein is tRNA sulfurtransferase of Shewanella amazonensis (strain ATCC BAA-1098 / SB2B).